The following is a 364-amino-acid chain: MATLSPLLLAALLWVPVGTLTCYGDSGQPVDWFVVYKLPAHSSPGDVAQSGLRYKYLDEESGGWRDGAGSINSSTGALGRSLLPLYRNTSQLAFLLYNDQPPKYRGSQHSSNRGHTKGVLLLDQEGGFWLIHSVPNFPPPSSSAAYSWPPSARTYGQTLICVSFPLTQFLNISRQLTYTYPMVYDYKLEGDFARKFPYLEEVVKGHHVLQEPWNSSVTLTSKAGASFQSFAKCGNFGDDLYSGWLAEALGSNLQVQFWQRSAGILPSNCSGVQHVLDVTQIAFPGPAGPNFNATEDHSKWCVAPERPWTCVGDMNRNKREEHRGGGTLCAQLPALWKAFKPLVKAWEPCEKENRAFSPRSPAKD.

The signal sequence occupies residues 1–21; that stretch reads MATLSPLLLAALLWVPVGTLT. Cys22 and Cys161 are disulfide-bonded. N-linked (GlcNAc...) asparagine glycosylation is found at Asn72, Asn88, Asn171, Asn214, Asn268, and Asn292. 2 cysteine pairs are disulfide-bonded: Cys269–Cys349 and Cys310–Cys329. His297 is a catalytic residue.

This sequence belongs to the DNase II family.

It localises to the lysosome. The catalysed reaction is Endonucleolytic cleavage to nucleoside 3'-phosphates and 3'-phosphooligonucleotide end-products.. In terms of biological role, hydrolyzes DNA under acidic conditions with a preference for double-stranded DNA. Plays a major role in the clearance of nucleic acids generated through apoptosis, hence preventing autoinflammation. Necessary for proper fetal development and for definitive erythropoiesis in fetal liver and bone marrow, where it degrades nuclear DNA expelled from erythroid precursor cells. In Sus scrofa (Pig), this protein is Deoxyribonuclease-2-alpha (DNASE2).